The sequence spans 273 residues: Proteasome subunit alpha (273 aa).

A disordered region spans residues 231–273; sequence DDGAAGQPPSSSDTDTSAAEARKPTASAGSADLEGPEPERPDS. The segment covering 238–249 has biased composition (low complexity); sequence PPSSSDTDTSAA.

Belongs to the peptidase T1A family. As to quaternary structure, the 20S proteasome core is composed of 14 alpha and 14 beta subunits that assemble into four stacked heptameric rings, resulting in a barrel-shaped structure. The two inner rings, each composed of seven catalytic beta subunits, are sandwiched by two outer rings, each composed of seven alpha subunits. The catalytic chamber with the active sites is on the inside of the barrel. Has a gated structure, the ends of the cylinder being occluded by the N-termini of the alpha-subunits. Is capped by the proteasome-associated ATPase, ARC.

Its subcellular location is the cytoplasm. Its pathway is protein degradation; proteasomal Pup-dependent pathway. The formation of the proteasomal ATPase ARC-20S proteasome complex, likely via the docking of the C-termini of ARC into the intersubunit pockets in the alpha-rings, may trigger opening of the gate for substrate entry. Interconversion between the open-gate and close-gate conformations leads to a dynamic regulation of the 20S proteasome proteolysis activity. Component of the proteasome core, a large protease complex with broad specificity involved in protein degradation. The polypeptide is Proteasome subunit alpha (Salinispora arenicola (strain CNS-205)).